The chain runs to 529 residues: Bifunctional purine biosynthesis protein PurH (529 aa).

The 148-residue stretch at 1-148 folds into the MGS-like domain; sequence MQQRRPVRRA…KNHKDVAIVV (148 aa).

It belongs to the PurH family.

It catalyses the reaction (6R)-10-formyltetrahydrofolate + 5-amino-1-(5-phospho-beta-D-ribosyl)imidazole-4-carboxamide = 5-formamido-1-(5-phospho-D-ribosyl)imidazole-4-carboxamide + (6S)-5,6,7,8-tetrahydrofolate. The catalysed reaction is IMP + H2O = 5-formamido-1-(5-phospho-D-ribosyl)imidazole-4-carboxamide. It participates in purine metabolism; IMP biosynthesis via de novo pathway; 5-formamido-1-(5-phospho-D-ribosyl)imidazole-4-carboxamide from 5-amino-1-(5-phospho-D-ribosyl)imidazole-4-carboxamide (10-formyl THF route): step 1/1. Its pathway is purine metabolism; IMP biosynthesis via de novo pathway; IMP from 5-formamido-1-(5-phospho-D-ribosyl)imidazole-4-carboxamide: step 1/1. This is Bifunctional purine biosynthesis protein PurH from Citrobacter koseri (strain ATCC BAA-895 / CDC 4225-83 / SGSC4696).